A 248-amino-acid chain; its full sequence is uncharacterized protein (248 aa).

Residue Ser-141 participates in substrate binding. Tyr-154 functions as the Proton acceptor in the catalytic mechanism.

It belongs to the short-chain dehydrogenases/reductases (SDR) family.

This is an uncharacterized protein from Methylorubrum extorquens (strain ATCC 14718 / DSM 1338 / JCM 2805 / NCIMB 9133 / AM1) (Methylobacterium extorquens).